The sequence spans 81 residues: Cytotoxin 3 (81 aa).

The first 21 residues, 1–21 (MKTLLLTLVVVTIVCLDLGYT), serve as a signal peptide directing secretion. 4 disulfide bridges follow: cysteine 24–cysteine 42, cysteine 35–cysteine 59, cysteine 63–cysteine 74, and cysteine 75–cysteine 80.

The protein belongs to the three-finger toxin family. Short-chain subfamily. Type IA cytotoxin sub-subfamily. Monomer in solution; Homodimer and oligomer in the presence of negatively charged lipids forming a pore with a size ranging between 20 and 30 Angstroms. Interacts with Kv channel-interacting protein 1 (KCNIP1) in a calcium-independent manner. In terms of tissue distribution, expressed by the venom gland.

It is found in the secreted. Its subcellular location is the target cell membrane. In terms of biological role, basic protein that binds to cell membrane and depolarizes cardiomyocytes. This cytotoxin also possesses lytic activity on many other cells, including red blood cells. Interaction with sulfatides in the cell membrane induces pore formation and cell internalization. Cytotoxicity is due to pore formation, and to another mechanism independent of membrane-damaging activity. When internalized, it targets the mitochondrial membrane and induces mitochondrial swelling and fragmentation. It inhibits protein kinases C. It binds to the integrin alpha-V/beta-3 (ITGAV/ITGB3) with a moderate affinity. It also binds with high affinity to heparin. The sequence is that of Cytotoxin 3 from Naja atra (Chinese cobra).